The primary structure comprises 159 residues: Bacterioferritin (159 aa).

A Ferritin-like diiron domain is found at 1 to 145; that stretch reads MQGDPEVLRL…TQLELMDKLG (145 aa). E51 contacts Fe cation. Residue M52 participates in heme b binding. 4 residues coordinate Fe cation: H54, E94, E127, and H130.

Belongs to the bacterioferritin family. Homooligomer of 24 subunits, arranged as 12 dimers, that are packed together to form an approximately spherical molecule with a central cavity, in which large amounts of iron can be deposited. Requires heme b as cofactor.

It catalyses the reaction 4 Fe(2+) + O2 + 4 H(+) = 4 Fe(3+) + 2 H2O. The catalysed reaction is Fe(2+)(in) = Fe(2+)(out). Its function is as follows. Iron-storage protein, whose ferroxidase center binds Fe(2+), oxidizes it using dioxygen to Fe(3+), and participates in the subsequent Fe(3+) oxide mineral core formation within the central cavity of the BFR protein shell. The sequence is that of Bacterioferritin (bfr) from Mycobacterium avium.